The following is a 486-amino-acid chain: UDP-N-acetylmuramate--L-alanine ligase (486 aa).

Gly-126–Thr-132 contributes to the ATP binding site.

It belongs to the MurCDEF family.

Its subcellular location is the cytoplasm. It catalyses the reaction UDP-N-acetyl-alpha-D-muramate + L-alanine + ATP = UDP-N-acetyl-alpha-D-muramoyl-L-alanine + ADP + phosphate + H(+). The protein operates within cell wall biogenesis; peptidoglycan biosynthesis. Cell wall formation. The sequence is that of UDP-N-acetylmuramate--L-alanine ligase from Pectobacterium atrosepticum (strain SCRI 1043 / ATCC BAA-672) (Erwinia carotovora subsp. atroseptica).